We begin with the raw amino-acid sequence, 149 residues long: Calmodulin (149 aa).

Ala2 carries the N-acetylalanine modification. 4 consecutive EF-hand domains span residues 8–43 (EQIAEFKEAFSLFDKDGDGTITTKELGTVMRSLGQN), 44–79 (PTEAELQDMINEVDADGNGTIDFPEFLTMMARKMKD), 81–116 (DSEEEIREAFRVFDKDGNGFISAAELRHVMTNLGEK), and 117–149 (LTDEEVDEMIREADIDGDGQVNYEEFVTMMTTK). Residues Asp21, Asp23, Asp25, Thr27, Glu32, Asp57, Asp59, Asn61, Thr63, Glu68, Asp94, Asp96, Asn98, and Glu105 each coordinate Ca(2+). Position 116 is an N6,N6,N6-trimethyllysine (Lys116). The Ca(2+) site is built by Asp130, Asp132, Asp134, Gln136, and Glu141.

This sequence belongs to the calmodulin family. In terms of assembly, interacts (in the presence of Ca(2+)) with pde-1, madf-3, rpl-7A, tax-6, efk-1, npp-1, obr-4, sos-1, akt-1, unc-13, tag-196, ugt-48, nmy-2, F27D4.4, ddx-23, efa-6 and R11H6.4.

Calmodulin mediates the control of a large number of enzymes, ion channels and other proteins by Ca(2+). Among the enzymes to be stimulated by the calmodulin-Ca(2+) complex are a number of protein kinases and phosphatases. This Caenorhabditis elegans protein is Calmodulin (cmd-1).